The chain runs to 90 residues: uncharacterized protein (90 aa).

The chain crosses the membrane as a helical span at residues 69–89; sequence LLYIFLGAMIVIIFLVIKNQL.

This sequence belongs to the IIV-6 466R family.

The protein resides in the membrane. This is an uncharacterized protein from Invertebrate iridescent virus 6 (IIV-6).